A 154-amino-acid polypeptide reads, in one-letter code: Crossover junction endodeoxyribonuclease RuvC (154 aa).

Active-site residues include Asp-7, Glu-67, and Asp-139. Residues Asp-7, Glu-67, and Asp-139 each coordinate Mg(2+).

It belongs to the RuvC family. In terms of assembly, homodimer which binds Holliday junction (HJ) DNA. The HJ becomes 2-fold symmetrical on binding to RuvC with unstacked arms; it has a different conformation from HJ DNA in complex with RuvA. In the full resolvosome a probable DNA-RuvA(4)-RuvB(12)-RuvC(2) complex forms which resolves the HJ. Requires Mg(2+) as cofactor.

It is found in the cytoplasm. The catalysed reaction is Endonucleolytic cleavage at a junction such as a reciprocal single-stranded crossover between two homologous DNA duplexes (Holliday junction).. Functionally, the RuvA-RuvB-RuvC complex processes Holliday junction (HJ) DNA during genetic recombination and DNA repair. Endonuclease that resolves HJ intermediates. Cleaves cruciform DNA by making single-stranded nicks across the HJ at symmetrical positions within the homologous arms, yielding a 5'-phosphate and a 3'-hydroxyl group; requires a central core of homology in the junction. The consensus cleavage sequence is 5'-(A/T)TT(C/G)-3'. Cleavage occurs on the 3'-side of the TT dinucleotide at the point of strand exchange. HJ branch migration catalyzed by RuvA-RuvB allows RuvC to scan DNA until it finds its consensus sequence, where it cleaves and resolves the cruciform DNA. This Prochlorococcus marinus (strain MIT 9303) protein is Crossover junction endodeoxyribonuclease RuvC.